Consider the following 568-residue polypeptide: Kinetochore protein NDC80 homolog (568 aa).

The disordered stretch occupies residues 1 to 59; sequence MRGGAAGKRRTTVGFGGAPPPPPPSIEQQRHLFNSRDSDASFASSRPSSIGLGGRGASD. A compositionally biased stretch (basic and acidic residues) spans 28–39; the sequence is QQRHLFNSRDSD. The span at 40–49 shows a compositional bias: low complexity; sequence ASFASSRPSS. 2 coiled-coil regions span residues 241 to 334 and 433 to 469; these read KESL…AEVA and IESKRSLLGSIQLQINDLEEKMKLVKKETQELSTKCD.

This sequence belongs to the NDC80/HEC1 family. Component of the NDC80 complex, which consists of NDC80, NUF2, SPC24 and SPC25.

The protein resides in the chromosome. It localises to the centromere. Its function is as follows. Acts as a component of the essential kinetochore-associated NDC80 complex, which is required for chromosome segregation and spindle checkpoint activity to ensure proper cell division. In Arabidopsis thaliana (Mouse-ear cress), this protein is Kinetochore protein NDC80 homolog.